We begin with the raw amino-acid sequence, 151 residues long: SsrA-binding protein (151 aa).

A disordered region spans residues 132-151 (KRQTIKKRDQDREIHRKYGI).

The protein belongs to the SmpB family.

The protein localises to the cytoplasm. In terms of biological role, required for rescue of stalled ribosomes mediated by trans-translation. Binds to transfer-messenger RNA (tmRNA), required for stable association of tmRNA with ribosomes. tmRNA and SmpB together mimic tRNA shape, replacing the anticodon stem-loop with SmpB. tmRNA is encoded by the ssrA gene; the 2 termini fold to resemble tRNA(Ala) and it encodes a 'tag peptide', a short internal open reading frame. During trans-translation Ala-aminoacylated tmRNA acts like a tRNA, entering the A-site of stalled ribosomes, displacing the stalled mRNA. The ribosome then switches to translate the ORF on the tmRNA; the nascent peptide is terminated with the 'tag peptide' encoded by the tmRNA and targeted for degradation. The ribosome is freed to recommence translation, which seems to be the essential function of trans-translation. This Lactobacillus gasseri (strain ATCC 33323 / DSM 20243 / BCRC 14619 / CIP 102991 / JCM 1131 / KCTC 3163 / NCIMB 11718 / NCTC 13722 / AM63) protein is SsrA-binding protein.